The chain runs to 251 residues: Vitamin B12 import ATP-binding protein BtuD (251 aa).

An ABC transporter domain is found at 2-236 (IRVNSLQVDS…EVLQSVFGTS (235 aa)). 30–37 (GPNGCGKS) contacts ATP.

The protein belongs to the ABC transporter superfamily. Vitamin B12 importer (TC 3.A.1.13.1) family. In terms of assembly, the complex is composed of two ATP-binding proteins (BtuD), two transmembrane proteins (BtuC) and a solute-binding protein (BtuF).

It is found in the cell inner membrane. It carries out the reaction an R-cob(III)alamin(out) + ATP + H2O = an R-cob(III)alamin(in) + ADP + phosphate + H(+). In terms of biological role, part of the ABC transporter complex BtuCDF involved in vitamin B12 import. Responsible for energy coupling to the transport system. This is Vitamin B12 import ATP-binding protein BtuD from Vibrio cholerae serotype O1 (strain ATCC 39541 / Classical Ogawa 395 / O395).